A 135-amino-acid polypeptide reads, in one-letter code: Ribosome-binding factor A (135 aa).

It belongs to the RbfA family. As to quaternary structure, monomer. Binds 30S ribosomal subunits, but not 50S ribosomal subunits or 70S ribosomes.

The protein localises to the cytoplasm. Functionally, one of several proteins that assist in the late maturation steps of the functional core of the 30S ribosomal subunit. Associates with free 30S ribosomal subunits (but not with 30S subunits that are part of 70S ribosomes or polysomes). Required for efficient processing of 16S rRNA. May interact with the 5'-terminal helix region of 16S rRNA. This chain is Ribosome-binding factor A, found in Hyphomonas neptunium (strain ATCC 15444).